The following is a 311-amino-acid chain: Porphobilinogen deaminase (311 aa).

An S-(dipyrrolylmethanemethyl)cysteine modification is found at cysteine 241.

Belongs to the HMBS family. In terms of assembly, monomer. The cofactor is dipyrromethane.

The catalysed reaction is 4 porphobilinogen + H2O = hydroxymethylbilane + 4 NH4(+). The protein operates within porphyrin-containing compound metabolism; protoporphyrin-IX biosynthesis; coproporphyrinogen-III from 5-aminolevulinate: step 2/4. In terms of biological role, tetrapolymerization of the monopyrrole PBG into the hydroxymethylbilane pre-uroporphyrinogen in several discrete steps. The chain is Porphobilinogen deaminase from Shouchella clausii (strain KSM-K16) (Alkalihalobacillus clausii).